A 433-amino-acid polypeptide reads, in one-letter code: ATP-dependent protease ATPase subunit HslU (433 aa).

Residues valine 18, 60 to 65 (GVGKTE), aspartate 246, glutamate 311, and arginine 383 each bind ATP.

This sequence belongs to the ClpX chaperone family. HslU subfamily. As to quaternary structure, a double ring-shaped homohexamer of HslV is capped on each side by a ring-shaped HslU homohexamer. The assembly of the HslU/HslV complex is dependent on binding of ATP.

The protein localises to the cytoplasm. Its function is as follows. ATPase subunit of a proteasome-like degradation complex; this subunit has chaperone activity. The binding of ATP and its subsequent hydrolysis by HslU are essential for unfolding of protein substrates subsequently hydrolyzed by HslV. HslU recognizes the N-terminal part of its protein substrates and unfolds these before they are guided to HslV for hydrolysis. The chain is ATP-dependent protease ATPase subunit HslU from Nitrobacter winogradskyi (strain ATCC 25391 / DSM 10237 / CIP 104748 / NCIMB 11846 / Nb-255).